A 473-amino-acid polypeptide reads, in one-letter code: Ornithine aminotransferase, mitochondrial (473 aa).

A mitochondrion-targeting transit peptide spans Met1–Ala32. Position 293 is an N6-(pyridoxal phosphate)lysine (Lys293).

Belongs to the class-III pyridoxal-phosphate-dependent aminotransferase family. In terms of assembly, homotetramer. Pyridoxal 5'-phosphate is required as a cofactor.

The protein localises to the mitochondrion matrix. The catalysed reaction is a 2-oxocarboxylate + L-ornithine = L-glutamate 5-semialdehyde + an L-alpha-amino acid. The protein operates within amino-acid biosynthesis; L-proline biosynthesis; L-glutamate 5-semialdehyde from L-ornithine: step 1/1. In terms of biological role, confers drought and oxidative stress tolerance mainly through enhancing ROS-scavenging capacity and Pro pre-accumulation. This is Ornithine aminotransferase, mitochondrial (OAT) from Oryza sativa subsp. japonica (Rice).